We begin with the raw amino-acid sequence, 203 residues long: Thymidylate kinase (203 aa).

10-17 (GIDGAGKS) contacts ATP.

The protein belongs to the thymidylate kinase family.

The catalysed reaction is dTMP + ATP = dTDP + ADP. Functionally, phosphorylation of dTMP to form dTDP in both de novo and salvage pathways of dTTP synthesis. This is Thymidylate kinase from Cupriavidus taiwanensis (strain DSM 17343 / BCRC 17206 / CCUG 44338 / CIP 107171 / LMG 19424 / R1) (Ralstonia taiwanensis (strain LMG 19424)).